The primary structure comprises 368 residues: MNTEASQDQTVTETPGVRLRQARESLGLTQQTVAERLCLKVSTIRDIEEDNAQANLASTFHRGYIRSYAKLVHLPEDELLPILEKQAPVRAAKVAPMQSFSLGKKHKKRDGWLMSFTWLIVLVVLGLTGAWWWQNHQAQQAEIANMVDQSSAQLSQNGGQPVPLTDDNSDAIAPTDAPAPVANGQPVPLTNHSTSAVTNSATTSSATTSSVPTTSSVPKTTLVPKTTLVPKTNSTEPVDTANTNTTMHQEGAASAAVSPSQVPQLGMPTDQPPLPTADAGVSGSASSVGALVMNFTADCWLQVVDATGKTLFSGIQKGGAVLNLAGKAPYKLTIGAPGALTISYQGNPVDLSKFIKANRVARLTVGVE.

The Cytoplasmic portion of the chain corresponds to 1 to 111 (MNTEASQDQT…LGKKHKKRDG (111 aa)). The HTH cro/C1-type domain occupies 19–79 (LRQARESLGL…KLVHLPEDEL (61 aa)). The H-T-H motif DNA-binding region spans 30–49 (QQTVAERLCLKVSTIRDIEE). The chain crosses the membrane as a helical; Signal-anchor for type II membrane protein span at residues 112–132 (WLMSFTWLIVLVVLGLTGAWW). At 133–368 (WQNHQAQQAE…RVARLTVGVE (236 aa)) the chain is on the periplasmic side. Residues 151–243 (SAQLSQNGGQ…STEPVDTANT (93 aa)) form a disordered region. Over residues 193–221 (STSAVTNSATTSSATTSSVPTTSSVPKTT) the composition is skewed to low complexity. Over residues 229 to 243 (VPKTNSTEPVDTANT) the composition is skewed to polar residues.

This sequence belongs to the RodZ family.

The protein resides in the cell inner membrane. In terms of biological role, cytoskeletal protein that is involved in cell-shape control through regulation of the length of the long axis. The sequence is that of Cytoskeleton protein RodZ from Yersinia pseudotuberculosis serotype O:3 (strain YPIII).